Reading from the N-terminus, the 81-residue chain is Putative membrane protein insertion efficiency factor (81 aa).

The disordered stretch occupies residues 59–81; sequence PWNPGGYDPVPPIKTSRSSSMAE.

This sequence belongs to the UPF0161 family.

Its subcellular location is the cell inner membrane. Its function is as follows. Could be involved in insertion of integral membrane proteins into the membrane. The protein is Putative membrane protein insertion efficiency factor of Azotobacter vinelandii (strain DJ / ATCC BAA-1303).